Here is a 464-residue protein sequence, read N- to C-terminus: MKNFAPSLALSLLLPTVQAQQTMWGQCGGAGWSGATDCVAGGVCSTQNAYYAQCLPGATTATTLSTTSKGTTTTTTSSTTSTGGGSSSTTTKTSTSAGPTVTGSPSGNPFSGYQQYANPYYSSEVHTLAIPSMTGALAVKASAVADVPSFVWLDVAAKVPTMGTYLENIRAKNKAGANPPVAGIFVVYDLPDRDCAALASNGEYAIADGGIAKYKAYIDAIRAQLLKYPDVHTILVIEPDSLANLITNINVAKCSGAKDAYLECINYALKQLNLPNVAMYIDAGHGGWLGWDANIGPAAEMYAKVYKDADAPAALRGLAVNVANYNAWTIDTCPSYTQGNKNCDEKRYIHALYPLLKAAGWDARFIMDTGRNGVQPTKQQAQGDWCNVIGTGFGIRPSSETGDDLLDAFVWVKPGAESDGTSDTTAARYDAHCGYTDALKPAPEAGQWFQAYFEQLLTNANPAF.

Positions Met-1–Ala-19 are cleaved as a signal peptide. Residues Gln-20 to Leu-55 enclose the CBM1 domain. Disulfide bonds link Cys-27/Cys-44 and Cys-38/Cys-54. Residues Thr-59–Thr-102 are thr-rich linker. Over residues Ser-65–Thr-100 the composition is skewed to low complexity. The interval Ser-65 to Asn-108 is disordered. Residues Gly-103–Phe-464 are catalytic. Asp-194 is an active-site residue. 2 cysteine pairs are disulfide-bonded: Cys-195–Cys-254 and Cys-386–Cys-433. Asp-240 (proton donor) is an active-site residue. The active-site Nucleophile is the Asp-419.

Belongs to the glycosyl hydrolase 6 (cellulase B) family.

The protein resides in the secreted. It catalyses the reaction Hydrolysis of (1-&gt;4)-beta-D-glucosidic linkages in cellulose and cellotetraose, releasing cellobiose from the non-reducing ends of the chains.. In terms of biological role, the biological conversion of cellulose to glucose generally requires three types of hydrolytic enzymes: (1) Endoglucanases which cut internal beta-1,4-glucosidic bonds; (2) Exocellobiohydrolases that cut the disaccharide cellobiose from the non-reducing end of the cellulose polymer chain; (3) Beta-1,4-glucosidases which hydrolyze the cellobiose and other short cello-oligosaccharides to glucose. The chain is Probable 1,4-beta-D-glucan cellobiohydrolase C (cbhC) from Aspergillus clavatus (strain ATCC 1007 / CBS 513.65 / DSM 816 / NCTC 3887 / NRRL 1 / QM 1276 / 107).